We begin with the raw amino-acid sequence, 612 residues long: MPSYRSRISTHGRNMAGARSLWRATGMKESDFGKPIIAIANSFTQFVPGHVHLKDLGQLVAQQIVASGGIAKEFNTIAIDDGIAMGHDGMLYSLPSREIIADSVEYMINAHCADALVCISNCDKITPGMLMASLRLNIPTIFVSGGPMEAGKIKWKDQDLTVDLVDAMVAAAAENNSEEEVAEMERAACPTCGSCSGMFTANSMNCLTEALGLSLPGNGSMLATHADRQMLFEEAGRQIVTLVKRYYEKGDETVLPRSIASRKAFENAMTVDISMGGSTNTVLHLLAAAQEGEVDFTMTEIDRLSRRVPVLCKVAPAVANVHMEDVHRAGGIMGLLGELDAVGLIDTSAYTVHAKTMKEALCRWDVKRTNEPKTHEFYRAAPGGISTQTAFSQSRRYDSLDLDREKGIIRDKEHAYSQDGGLAVLYGNLAKDGCIVKTAGVDQSILTFKGPARIFESQDSAVSAILNDTIQSGDIVLIRYEGPRGGPGMQEMLYPTSYLKSKGLGKVCALITDGRFSGGTSGLSIGHVSPEAAEGGAIALVEEGDIIEIDIPNRTIHMLVEDDELMHRRVKMEAKGKAAWQPTEKRKRKVSKALKAYAAMTTSAAKGAVRNI.

Asp-81 contributes to the Mg(2+) binding site. Cys-122 lines the [2Fe-2S] cluster pocket. Asp-123 and Lys-124 together coordinate Mg(2+). Lys-124 carries the post-translational modification N6-carboxylysine. Cys-195 is a [2Fe-2S] cluster binding site. Glu-491 provides a ligand contact to Mg(2+). Catalysis depends on Ser-517, which acts as the Proton acceptor.

This sequence belongs to the IlvD/Edd family. In terms of assembly, homodimer. [2Fe-2S] cluster is required as a cofactor. It depends on Mg(2+) as a cofactor.

The enzyme catalyses (2R)-2,3-dihydroxy-3-methylbutanoate = 3-methyl-2-oxobutanoate + H2O. It catalyses the reaction (2R,3R)-2,3-dihydroxy-3-methylpentanoate = (S)-3-methyl-2-oxopentanoate + H2O. Its pathway is amino-acid biosynthesis; L-isoleucine biosynthesis; L-isoleucine from 2-oxobutanoate: step 3/4. It participates in amino-acid biosynthesis; L-valine biosynthesis; L-valine from pyruvate: step 3/4. Its function is as follows. Functions in the biosynthesis of branched-chain amino acids. Catalyzes the dehydration of (2R,3R)-2,3-dihydroxy-3-methylpentanoate (2,3-dihydroxy-3-methylvalerate) into 2-oxo-3-methylpentanoate (2-oxo-3-methylvalerate) and of (2R)-2,3-dihydroxy-3-methylbutanoate (2,3-dihydroxyisovalerate) into 2-oxo-3-methylbutanoate (2-oxoisovalerate), the penultimate precursor to L-isoleucine and L-valine, respectively. This is Dihydroxy-acid dehydratase from Bartonella henselae (strain ATCC 49882 / DSM 28221 / CCUG 30454 / Houston 1) (Rochalimaea henselae).